The primary structure comprises 164 residues: Transcription antitermination protein NusB (164 aa).

Belongs to the NusB family.

Its function is as follows. Involved in transcription antitermination. Required for transcription of ribosomal RNA (rRNA) genes. Binds specifically to the boxA antiterminator sequence of the ribosomal RNA (rrn) operons. The protein is Transcription antitermination protein NusB of Chlorobium limicola (strain DSM 245 / NBRC 103803 / 6330).